Here is a 120-residue protein sequence, read N- to C-terminus: Large ribosomal subunit protein bL19 (120 aa).

Belongs to the bacterial ribosomal protein bL19 family.

Its function is as follows. This protein is located at the 30S-50S ribosomal subunit interface and may play a role in the structure and function of the aminoacyl-tRNA binding site. This is Large ribosomal subunit protein bL19 from Dichelobacter nodosus (strain VCS1703A).